The primary structure comprises 91 residues: UPF0250 protein BP0104 (91 aa).

It belongs to the UPF0250 family.

In Bordetella pertussis (strain Tohama I / ATCC BAA-589 / NCTC 13251), this protein is UPF0250 protein BP0104.